Reading from the N-terminus, the 181-residue chain is Cytidylate kinase (181 aa).

12–20 (GLAGSGTTT) provides a ligand contact to ATP.

This sequence belongs to the cytidylate kinase family. Type 2 subfamily.

Its subcellular location is the cytoplasm. The catalysed reaction is CMP + ATP = CDP + ADP. It carries out the reaction dCMP + ATP = dCDP + ADP. This chain is Cytidylate kinase (cmk), found in Pyrococcus abyssi (strain GE5 / Orsay).